Here is a 1083-residue protein sequence, read N- to C-terminus: uncharacterized protein (1083 aa).

Positions 93 to 145 are disordered; sequence SKGNLRYVPTTSRNPSNTDTYSSSIDISSSSSSINTSDDSSGKTSSNDLSDMS. Residues 108 to 145 are compositionally biased toward low complexity; that stretch reads SNTDTYSSSIDISSSSSSINTSDDSSGKTSSNDLSDMS.

Its subcellular location is the virion. This is an uncharacterized protein from Acanthamoeba polyphaga (Amoeba).